Here is a 187-residue protein sequence, read N- to C-terminus: dCTP deaminase, dUMP-forming (187 aa).

Residues 101–106 (KSSLGR) and Asp-119 each bind dCTP. Glu-129 acts as the Proton donor/acceptor in catalysis. Gln-148, Tyr-162, and Gln-174 together coordinate dCTP.

It belongs to the dCTP deaminase family. Homotrimer.

It carries out the reaction dCTP + 2 H2O = dUMP + NH4(+) + diphosphate. Its pathway is pyrimidine metabolism; dUMP biosynthesis; dUMP from dCTP: step 1/1. Bifunctional enzyme that catalyzes both the deamination of dCTP to dUTP and the hydrolysis of dUTP to dUMP without releasing the toxic dUTP intermediate. This is dCTP deaminase, dUMP-forming from Corynebacterium kroppenstedtii (strain DSM 44385 / JCM 11950 / CIP 105744 / CCUG 35717).